Consider the following 538-residue polypeptide: Interleukin-21 receptor (538 aa).

Positions 1 to 19 (MPRGWAAPLLLLLLQGGWG) are cleaved as a signal peptide. Cystine bridges form between cysteine 20–cysteine 109, cysteine 25–cysteine 35, and cysteine 65–cysteine 81. The Extracellular portion of the chain corresponds to 20 to 232 (CPDLVCYTDY…FQTQSEELKE (213 aa)). 2 consecutive Fibronectin type-III domains span residues 21–118 (PDLV…AESI) and 119–228 (KPAP…TQSE). Residues asparagine 73, asparagine 97, asparagine 104, asparagine 125, and asparagine 135 are each glycosylated (N-linked (GlcNAc...) asparagine). C-linked (Man) tryptophan glycosylation occurs at tryptophan 214. Positions 214-218 (WSEWS) match the WSXWS motif motif. A helical membrane pass occupies residues 233-253 (GWNPHLLLLLLLVIVFIPAFW). Residues 254-538 (SLKTHPLWRL…PLSSPGPQAS (285 aa)) lie on the Cytoplasmic side of the membrane. The Box 1 motif signature appears at 266 to 274 (KIWAVPSPE). Disordered regions lie at residues 342-367 (ESDG…SEER) and 457-487 (EDWA…GLDM).

Belongs to the type I cytokine receptor family. Type 4 subfamily. In terms of assembly, heterodimer with the common gamma subunit. Associates with JAK1. C-mannosylated at Trp-214 in the WSXWS motif, the sugar chain makes extensive hydrogen bonds with Asn-73 sugar, and bridges the two fibronectin domains transforming the V-shaped receptor into an A-frame. As to expression, selectively expressed in lymphoid tissues. Most highly expressed in thymus and spleen.

Its subcellular location is the membrane. Functionally, this is a receptor for interleukin-21. This is Interleukin-21 receptor (IL21R) from Homo sapiens (Human).